The following is a 372-amino-acid chain: Glutamine synthetase (372 aa).

Positions 24-103 (VIAEYVWVDG…VLAECFNSDG (80 aa)) constitute a GS beta-grasp domain. A GS catalytic domain is found at 110–372 (HRHEANKLFQ…KEYERETNEQ (263 aa)).

It belongs to the glutamine synthetase family. In terms of assembly, homooctamer.

It localises to the cytoplasm. The enzyme catalyses L-glutamate + NH4(+) + ATP = L-glutamine + ADP + phosphate + H(+). This Candida glabrata (strain ATCC 2001 / BCRC 20586 / JCM 3761 / NBRC 0622 / NRRL Y-65 / CBS 138) (Yeast) protein is Glutamine synthetase (GLN1).